The sequence spans 451 residues: 2-succinylbenzoate--CoA ligase (451 aa).

It belongs to the ATP-dependent AMP-binding enzyme family. MenE subfamily.

It carries out the reaction 2-succinylbenzoate + ATP + CoA = 2-succinylbenzoyl-CoA + AMP + diphosphate. Its pathway is quinol/quinone metabolism; 1,4-dihydroxy-2-naphthoate biosynthesis; 1,4-dihydroxy-2-naphthoate from chorismate: step 5/7. The protein operates within quinol/quinone metabolism; menaquinone biosynthesis. Functionally, converts 2-succinylbenzoate (OSB) to 2-succinylbenzoyl-CoA (OSB-CoA). In Escherichia coli (strain K12), this protein is 2-succinylbenzoate--CoA ligase.